A 284-amino-acid polypeptide reads, in one-letter code: Nucleotide-binding protein SPO0713 (284 aa).

3 to 10 is a binding site for ATP; the sequence is GPSGAGRS. A GTP-binding site is contributed by 50 to 53; sequence DARN.

This sequence belongs to the RapZ-like family.

In terms of biological role, displays ATPase and GTPase activities. The polypeptide is Nucleotide-binding protein SPO0713 (Ruegeria pomeroyi (strain ATCC 700808 / DSM 15171 / DSS-3) (Silicibacter pomeroyi)).